A 525-amino-acid chain; its full sequence is Neuropilin and tolloid-like protein 2 (525 aa).

The signal sequence occupies residues 1–22 (MALEQLCAVLKVLLITVLVVEG). Residues 23–347 (IAVAQKTQDG…GLFEQITKTH (325 aa)) lie on the Extracellular side of the membrane. 7 disulfide bridges follow: cysteine 45–cysteine 72, cysteine 100–cysteine 122, cysteine 177–cysteine 207, cysteine 234–cysteine 256, cysteine 297–cysteine 309, cysteine 304–cysteine 322, and cysteine 316–cysteine 331. 2 consecutive CUB domains span residues 45–159 (CGIW…YSFI) and 177–292 (CQFE…FTSF). In terms of domain architecture, LDL-receptor class A spans 296–332 (PCTSSTFFCHSNMCINNSLVCNGVQNCAYPWDENHCK). Asparagine 311 is a glycosylation site (N-linked (GlcNAc...) asparagine). The helical transmembrane segment at 348-368 (GTIIGITSGIVLVLLIISILV) threads the bilayer. Residues 369–525 (QVKQPRKKVM…SAQASISIDF (157 aa)) are Cytoplasmic-facing. Serine 409 carries the phosphoserine modification.

Interacts with GRIK2 and GRIK3, but neither with AMPA-nor with NMDA-sensitive glutamate receptors. Post-translationally, N-glycosylated. Expressed in brain tissues, including cerebellar granule cells (at protein level).

The protein localises to the cell membrane. Functionally, accessory subunit of neuronal kainate-sensitive glutamate receptors, GRIK2 and GRIK3. Increases kainate-receptor channel activity, slowing the decay kinetics of the receptors, without affecting their expression at the cell surface, and increasing the open probability of the receptor channels. Modulates the agonist sensitivity of kainate receptors. Slows the decay of kainate receptor-mediated excitatory postsynaptic currents (EPSCs), thus directly influencing synaptic transmission. This Mus musculus (Mouse) protein is Neuropilin and tolloid-like protein 2 (Neto2).